Reading from the N-terminus, the 324-residue chain is Acetyl-coenzyme A carboxylase carboxyl transferase subunit alpha (324 aa).

The region spanning 37–291 (KLERRLDKLK…RDFILREWLR (255 aa)) is the CoA carboxyltransferase C-terminal domain.

Belongs to the AccA family. Acetyl-CoA carboxylase is a heterohexamer composed of biotin carboxyl carrier protein (AccB), biotin carboxylase (AccC) and two subunits each of ACCase subunit alpha (AccA) and ACCase subunit beta (AccD).

The protein resides in the cytoplasm. The enzyme catalyses N(6)-carboxybiotinyl-L-lysyl-[protein] + acetyl-CoA = N(6)-biotinyl-L-lysyl-[protein] + malonyl-CoA. The protein operates within lipid metabolism; malonyl-CoA biosynthesis; malonyl-CoA from acetyl-CoA: step 1/1. In terms of biological role, component of the acetyl coenzyme A carboxylase (ACC) complex. First, biotin carboxylase catalyzes the carboxylation of biotin on its carrier protein (BCCP) and then the CO(2) group is transferred by the carboxyltransferase to acetyl-CoA to form malonyl-CoA. This chain is Acetyl-coenzyme A carboxylase carboxyl transferase subunit alpha, found in Chlamydia abortus (strain DSM 27085 / S26/3) (Chlamydophila abortus).